The sequence spans 460 residues: Cysteine--tRNA ligase (460 aa).

Residue cysteine 28 participates in Zn(2+) binding. Positions 30-40 (VTIYDLCHIGH) match the 'HIGH' region motif. The Zn(2+) site is built by cysteine 209, histidine 234, and glutamate 238. A 'KMSKS' region motif is present at residues 266-270 (KMSKS). Lysine 269 contributes to the ATP binding site.

The protein belongs to the class-I aminoacyl-tRNA synthetase family. As to quaternary structure, monomer. The cofactor is Zn(2+).

The protein resides in the cytoplasm. It catalyses the reaction tRNA(Cys) + L-cysteine + ATP = L-cysteinyl-tRNA(Cys) + AMP + diphosphate. This Vibrio parahaemolyticus serotype O3:K6 (strain RIMD 2210633) protein is Cysteine--tRNA ligase.